We begin with the raw amino-acid sequence, 1402 residues long: Eukaryotic translation initiation factor 4 gamma 1 (1402 aa).

Disordered stretches follow at residues 1-123 (MSGA…SPEP) and 165-402 (HEPN…YEYK). Phosphothreonine occurs at positions 11 and 27. The span at 53–64 (GPEHSPSESQPS) shows a compositional bias: low complexity. Residues 65–76 (SPSPTPSPPPIL) are compositionally biased toward pro residues. S120 carries the phosphoserine modification. The span at 238–251 (ASATPPAVPSATPA) shows a compositional bias: low complexity. Residues 261-275 (QEEEGEEEEEEEEGE) show a composition bias toward acidic residues. Basic and acidic residues-rich tracts occupy residues 280-290 (ESDKGGEDLHP) and 324-340 (KELN…DAFK). Positions 359 to 370 (PTPESEGSSGPS) are enriched in low complexity. Residues 379-388 (WDAKEDKIHN) show a composition bias toward basic and acidic residues. T452 is subject to Phosphothreonine. Disordered stretches follow at residues 476–517 (ANLG…PPKG), 536–563 (AEKA…GSKT), 600–636 (SKGS…ATTE), and 828–1028 (MAKG…KREA). Residues 479-488 (GRPALSSRGP) show a composition bias toward low complexity. Omega-N-methylarginine occurs at positions 490 and 499. Over residues 547-563 (TAADKDRGEEDADGSKT) the composition is skewed to basic and acidic residues. One can recognise an MIF4G domain in the interval 567–793 (FRRVRSILNK…QDVLDLRQSN (227 aa)). Over residues 602–621 (GSLTSSLRRPFQNPTSQWPS) the composition is skewed to polar residues. Residue S832 is modified to Phosphoserine. R836 and R846 each carry omega-N-methylarginine. S881 and S896 each carry phosphoserine. The span at 892 to 913 (GGRLSWGKGSSGSGAKPSDAAS) shows a compositional bias: low complexity. An N6-acetyllysine modification is found at K899. The segment covering 918–937 (PATSTLNRFSALQQAVPTES) has biased composition (polar residues). S948 and S950 each carry phosphoserine. Over residues 949–981 (LSRERGGKAGEPRRRLERSERGGDRGDRLDRAR) the composition is skewed to basic and acidic residues. Position 988 is a phosphoserine; by PKC/PRKCA (S988). Residues 989-1028 (FSKEVEERSRERPSQPEGLRKAASLTEDRDRGRDAAKREA) are compositionally biased toward basic and acidic residues. Phosphoserine is present on residues S990, S997, and S1012. T1014 carries the phosphothreonine modification. S1034 and S1041 each carry phosphoserine. The MI domain maps to 1044-1166 (ELEKKSKAII…PMGELFREIT (123 aa)). Positions 1231–1401 (EESEAPGQRA…REVEEEESDH (171 aa)) constitute a W2 domain. Phosphoserine is present on S1399.

This sequence belongs to the eukaryotic initiation factor 4G family. As to quaternary structure, eIF4F is a multi-subunit complex, the composition of which varies with external and internal environmental conditions. It is composed of at least EIF4A, EIF4E (cap-binding) and EIF4G1/EIF4G3. Interacts with eIF3 complex, mutually exclusive with EIF4A1 or EIF4A2, EIF4E and through its N-terminus with PABPC1. Interacts with EIF4E or with EIF1 (mutually exclusive) through a common binding site. Interacts through its C-terminus with the serine/threonine kinases MKNK1, and with MKNK2. Appears to act as a scaffold protein, holding these enzymes in place to phosphorylate EIF4E. Non-phosphorylated EIF4EBP1 competes with EIF4G1/EIF4G3 to interact with EIF4E; insulin stimulated MAP-kinase (MAPK1 and MAPK3) phosphorylation of EIF4EBP1 causes dissociation of the complex allowing EIF4G1/EIF4G3 to bind and consequent initiation of translation. EIF4G1/EIF4G3 interacts with PABPC1 to bring about circularization of the mRNA. Interacts with EIF4E3. Interacts with CIRBP and MIF4GD. Interacts with RBM4. Interacts with HNRNPD/AUF1; the interaction requires RNA. Interacts with DDX3X; the interaction requires RNA. Interacts with DAZAP2. Post-translationally, phosphorylated at multiple sites in vivo. Phosphorylation at Ser-988 by PRKCA induces binding to MKNK1.

The protein resides in the cytoplasm. Its subcellular location is the nucleus. The protein localises to the stress granule. Component of the protein complex eIF4F, which is involved in the recognition of the mRNA cap, ATP-dependent unwinding of 5'-terminal secondary structure and recruitment of mRNA to the ribosome. Exists in two complexes, either with EIF1 or with EIF4E (mutually exclusive). Together with EIF1, is required for leaky scanning, in particular for avoiding cap-proximal start codon. Together with EIF4E, antagonizes the scanning promoted by EIF1-EIF4G1 and locates the start codon (through a TISU element) without scanning. As a member of the eIF4F complex, required for endoplasmic reticulum stress-induced ATF4 mRNA translation. This Oryctolagus cuniculus (Rabbit) protein is Eukaryotic translation initiation factor 4 gamma 1 (EIF4G1).